Consider the following 458-residue polypeptide: tRNA modification GTPase MnmE (458 aa).

3 residues coordinate (6S)-5-formyl-5,6,7,8-tetrahydrofolate: Arg28, Glu85, and Lys124. Residues 220 to 381 (GMNVVIAGRP…LKEHLKAVMG (162 aa)) enclose the TrmE-type G domain. Asn230 contributes to the K(+) binding site. GTP is bound by residues 230-235 (NAGKSS), 249-255 (TDIEGTT), and 274-277 (DTAG). Residue Ser234 coordinates Mg(2+). Positions 249, 251, and 254 each coordinate K(+). Thr255 contacts Mg(2+). Residue Lys458 coordinates (6S)-5-formyl-5,6,7,8-tetrahydrofolate.

It belongs to the TRAFAC class TrmE-Era-EngA-EngB-Septin-like GTPase superfamily. TrmE GTPase family. As to quaternary structure, homodimer. Heterotetramer of two MnmE and two MnmG subunits. It depends on K(+) as a cofactor.

The protein localises to the cytoplasm. Functionally, exhibits a very high intrinsic GTPase hydrolysis rate. Involved in the addition of a carboxymethylaminomethyl (cmnm) group at the wobble position (U34) of certain tRNAs, forming tRNA-cmnm(5)s(2)U34. The polypeptide is tRNA modification GTPase MnmE (Chromohalobacter salexigens (strain ATCC BAA-138 / DSM 3043 / CIP 106854 / NCIMB 13768 / 1H11)).